A 196-amino-acid chain; its full sequence is S-norcoclaurine synthase 2 (196 aa).

An N-terminal signal peptide occupies residues Met-1–Cys-19. Residue Tyr-104–Glu-106 coordinates dopamine. The active-site Proton donor is the Lys-118. Asp-137 is a binding site for (4-hydroxyphenyl)acetaldehyde.

It belongs to the BetVI family.

The enzyme catalyses (4-hydroxyphenyl)acetaldehyde + dopamine = (S)-norcoclaurine + H2O. Not inhibited by O-phenanthroline or EDTA. In terms of biological role, involved in the biosynthesis of the common precursor of all benzylisoquinoline alkaloids such as morphine, sanguinarine, codeine or berberine. Condenses dopamine and pyruvic acid or 4-hydroxyphenylpyruvate. This chain is S-norcoclaurine synthase 2 (PR10A), found in Coptis japonica (Japanese goldthread).